The sequence spans 257 residues: Acetylglutamate kinase (257 aa).

Residues 41–42 (GG), arginine 63, and asparagine 158 each bind substrate.

Belongs to the acetylglutamate kinase family. ArgB subfamily.

The protein resides in the cytoplasm. It carries out the reaction N-acetyl-L-glutamate + ATP = N-acetyl-L-glutamyl 5-phosphate + ADP. Its pathway is amino-acid biosynthesis; L-arginine biosynthesis; N(2)-acetyl-L-ornithine from L-glutamate: step 2/4. In terms of biological role, catalyzes the ATP-dependent phosphorylation of N-acetyl-L-glutamate. This chain is Acetylglutamate kinase, found in Phocaeicola vulgatus (strain ATCC 8482 / DSM 1447 / JCM 5826 / CCUG 4940 / NBRC 14291 / NCTC 11154) (Bacteroides vulgatus).